A 418-amino-acid polypeptide reads, in one-letter code: MTIFEELKARGLIFQTTDEEALVKAFEEGPVSFYTGYDPTADSLHLGHLVAILTSRRLQLAGHKPYALVGGATGLIGDPSFNDAERSLQTKETVEGWVEKIQGQLSRFLDFENGDNKAVMVNNYDWFGSVSFIDFLRDVGKYFTVNYMMSKESVKKRIETGISYTEFAYQIMQGYDFYELNAKYGVTLQIGGSDQWGNMTAGTELLRRKADKSGHVITVPLITDSTGKKFGKSEGNAVWLDATKTTPYEMYQFWLNVMDDDAVRFLKIFTFLSLEEIEEIGKEFDQARHQRLAQKVLAREVVTLVHGKEAYEQAVHITEQLFAGNLKALSARDLKVALNGVPTYEISADENLNIVELLVNAKISPSKRQAREDVQNGAIYINGERVQDLDYTLSDTDKIDNEITVIRRGKKKNFVLTY.

Y34 provides a ligand contact to L-tyrosine. The short motif at 39–48 (PTADSLHLGH) is the 'HIGH' region element. L-tyrosine contacts are provided by Y169 and Q173. Residues 229–233 (KFGKS) carry the 'KMSKS' region motif. K232 lines the ATP pocket. Positions 352 to 418 (LNIVELLVNA…GKKKNFVLTY (67 aa)) constitute an S4 RNA-binding domain.

The protein belongs to the class-I aminoacyl-tRNA synthetase family. TyrS type 1 subfamily. In terms of assembly, homodimer.

It localises to the cytoplasm. The enzyme catalyses tRNA(Tyr) + L-tyrosine + ATP = L-tyrosyl-tRNA(Tyr) + AMP + diphosphate + H(+). Functionally, catalyzes the attachment of tyrosine to tRNA(Tyr) in a two-step reaction: tyrosine is first activated by ATP to form Tyr-AMP and then transferred to the acceptor end of tRNA(Tyr). In Streptococcus thermophilus (strain ATCC BAA-491 / LMD-9), this protein is Tyrosine--tRNA ligase.